The following is a 397-amino-acid chain: Elongation factor Tu (397 aa).

Residues lysine 10–glutamate 207 form the tr-type G domain. The tract at residues glycine 19–threonine 26 is G1. Glycine 19–threonine 26 contacts GTP. Threonine 26 provides a ligand contact to Mg(2+). The tract at residues glycine 60–asparagine 64 is G2. Residues aspartate 81–glycine 84 are G3. GTP-binding positions include aspartate 81–histidine 85 and asparagine 136–aspartate 139. The G4 stretch occupies residues asparagine 136 to aspartate 139. Residues serine 174–leucine 176 form a G5 region.

This sequence belongs to the TRAFAC class translation factor GTPase superfamily. Classic translation factor GTPase family. EF-Tu/EF-1A subfamily. Monomer.

It is found in the cytoplasm. It carries out the reaction GTP + H2O = GDP + phosphate + H(+). GTP hydrolase that promotes the GTP-dependent binding of aminoacyl-tRNA to the A-site of ribosomes during protein biosynthesis. The chain is Elongation factor Tu from Syntrophus aciditrophicus (strain SB).